Here is a 417-residue protein sequence, read N- to C-terminus: UDP-N-acetylglucosamine 1-carboxyvinyltransferase (417 aa).

22-23 (KN) lines the phosphoenolpyruvate pocket. Arg92 is a binding site for UDP-N-acetyl-alpha-D-glucosamine. Cys116 (proton donor) is an active-site residue. Cys116 carries the 2-(S-cysteinyl)pyruvic acid O-phosphothioketal modification. UDP-N-acetyl-alpha-D-glucosamine is bound by residues 121-125 (RPIDL), Asp306, and Ile328.

Belongs to the EPSP synthase family. MurA subfamily.

It localises to the cytoplasm. It carries out the reaction phosphoenolpyruvate + UDP-N-acetyl-alpha-D-glucosamine = UDP-N-acetyl-3-O-(1-carboxyvinyl)-alpha-D-glucosamine + phosphate. Its pathway is cell wall biogenesis; peptidoglycan biosynthesis. Its function is as follows. Cell wall formation. Adds enolpyruvyl to UDP-N-acetylglucosamine. This is UDP-N-acetylglucosamine 1-carboxyvinyltransferase from Buchnera aphidicola subsp. Schizaphis graminum (strain Sg).